Here is a 158-residue protein sequence, read N- to C-terminus: Transcription elongation factor GreA (158 aa).

The segment covering 24-43 (DVERPKASEAIGEARDKGDL) has biased composition (basic and acidic residues). The segment at 24 to 47 (DVERPKASEAIGEARDKGDLSENA) is disordered. Positions 48–68 (EYDAAKEAQGLLEMKISKMEE) form a coiled coil.

The protein belongs to the GreA/GreB family.

Functionally, necessary for efficient RNA polymerase transcription elongation past template-encoded arresting sites. The arresting sites in DNA have the property of trapping a certain fraction of elongating RNA polymerases that pass through, resulting in locked ternary complexes. Cleavage of the nascent transcript by cleavage factors such as GreA or GreB allows the resumption of elongation from the new 3'terminus. GreA releases sequences of 2 to 3 nucleotides. The polypeptide is Transcription elongation factor GreA (Christiangramia forsetii (strain DSM 17595 / CGMCC 1.15422 / KT0803) (Gramella forsetii)).